Consider the following 355-residue polypeptide: Sesquiterpene synthase-like protein Agr11 (355 aa).

The protein belongs to the terpene synthase family.

The protein is Sesquiterpene synthase-like protein Agr11 of Cyclocybe aegerita (Black poplar mushroom).